Reading from the N-terminus, the 1152-residue chain is MRKFNIRKVLDGLTAGSSSASQQQQQQQHPPGNREPEIQETLQSEHFQLCKTVRHGFPYQPSALAFDPVQKILAVGTQTGALRLFGRPGVECYCQHDSGAAVIQLQFLINEGALVSALADDTLHLWNLRQKRPAVLHSLKFCRERVTFCHLPFQSKWLYVGTERGNIHIVNVESFTLSGYVIMWNKAIELSSKSHPGPVVHISDNPMDEGKLLIGFESGTVVLWDLKSKKADYRYTYDEAIHSVAWHHEGKQFICSHSDGTLTIWNVRSPTKPVQTITPHGKQLKDGKKPEPCKPILKVEFKTTRSGEPFIILSGGLSYDTVGRRPCLTVMHGKSTAVLEMDYSIVDFLTLCETPYPNDFQEPYAVVVLLEKDLVLIDLAQNGYPIFENPYPLSIHESPVTCCEYFADCPVDLIPALYSVGARQKRQGYSKKEWPINGGNWGLGAQSYPEIIITGHADGSIKFWDASAITLQVLYKLKTSKVFEKSRNKDDRQNTDIVDEDPYAIQIISWCPESRMLCIAGVSAHVIIYRFSKQEVVTEVIPMLEVRLLYEINDVETPEGEQPPPLSTPVGSSTSQPIPPQSHPSTSSSSSDGLRDNVPCLKVKNSPLKQSPGYQTELVIQLVWVGGEPPQQITSLALNSSYGLVVFGNSNGIAMVDYLQKAVLLNLSTIELYGSNDPYRREPRSPRKSRQPSGAGLCDITEGTVVPEDRCKSPTSGSSSPHNSDDEQKVNNFIEKVKTQSRKFSKMVASDLAKMSRKLSLPTDLKPDLDVKDNSFSRSRSSSVTSIDKESREAISALHFCETFTRKADSSPSPCLWVGTTVGTAFVITLNLPLGPEQRLLQPVIVSPSGTILRLKGAILRMAFLDAAGCLMPPAYEPWTEHNVPEEKDEKEKLKKRRPVSVSPSSSQEISENQYAVICSEKQAKVISLPTQNCAYKQNITETSFVLRGDIVALSNSVCLACFCANGHIMTFSLPSLRPLLDVYYLPLTNMRIARTFCFANSGQALYLVSPTEIQRLTYSQETCENLQEMLGELFTPVETPEAPNRGFFKGLFGGGAQSLDREELFGESSSGKASRSLAQHIPGPGGIEGVKGAASGVVGELARARLALDERGQKLSDLEERTAAMMSSADSFSKHAHEMMLKYKDKKWYQF.

The tract at residues 14 to 35 (TAGSSSASQQQQQQQHPPGNRE) is disordered. The segment covering 17 to 28 (SSSASQQQQQQQ) has biased composition (low complexity). WD repeat units lie at residues 62–95 (SALA…CYCQ), 102–141 (VIQL…SLKF), 146–182 (VTFC…GYVI), 201–235 (HISD…DYRY), 241–273 (IHSV…PTKP), 295–337 (PILK…KSTA), 345–379 (IVDF…LIDL), 401–478 (TCCE…YKLK), 506–620 (QIIS…ELVI), and 634–696 (TSLA…SGAG). 2 disordered regions span residues 557-596 (TPEG…GLRD) and 675-731 (SNDP…QKVN). Position 693 is a phosphoserine (Ser693). The span at 713 to 722 (SPTSGSSSPH) shows a compositional bias: low complexity. Ser724 is subject to Phosphoserine; by PKA. At Ser760 the chain carries Phosphoserine. Position 763 is a phosphothreonine (Thr763). Ser783 is subject to Phosphoserine. Thr785 carries the post-translational modification Phosphothreonine. Position 786 is a phosphoserine (Ser786). 4 WD repeats span residues 795 to 852 (ISAL…SGTI), 861 to 935 (RMAF…QNCA), 940 to 984 (ITET…LDVY), and 998 to 1021 (CFAN…TYSQ). The segment covering 879–893 (WTEHNVPEEKDEKEK) has biased composition (basic and acidic residues). Residues 879 to 907 (WTEHNVPEEKDEKEKLKKRRPVSVSPSSS) form a disordered region. Phosphoserine is present on residues Ser901 and Ser903. Thr1040 bears the Phosphothreonine mark. A phosphoserine mark is found at Ser1059 and Ser1132. The v-SNARE coiled-coil homology domain occupies 1087 to 1147 (GIEGVKGAAS…HEMMLKYKDK (61 aa)).

Belongs to the WD repeat L(2)GL family. In terms of assembly, part of a complex that contains STXBP5, STX4A and SNAP23. Interacts with STX1A and STX4A via its v-SNARE homology domain. Part of a complex that contains STX1, STXBP5, SNAP25 and SYT1. Post-translationally, phosphorylation by PKA reduces interaction with STX1A and enhances synaptic neurotransmitter release. Isoform 1 is detected in heart, brain, lung, liver, skeletal muscle, kidney and testis. Isoform 2 is detected in brain and in testis. Isoform 3 is detected in testis.

It localises to the cytoplasm. Its subcellular location is the cell membrane. The protein localises to the cytoplasmic vesicle membrane. It is found in the synapse. The protein resides in the cytoplasmic vesicle. It localises to the secretory vesicle. Its subcellular location is the synaptic vesicle. Functionally, inhibits translocation of GLUT4 from intracellular vesicles to the plasma membrane. Plays a regulatory role in calcium-dependent exocytosis and neurotransmitter release. Inhibits membrane fusion between transport vesicles and the plasma membrane. May modulate the assembly of trans-SNARE complexes between transport vesicles and the plasma membrane. Competes with STXBP1 for STX1 binding. The polypeptide is Syntaxin-binding protein 5 (Stxbp5) (Rattus norvegicus (Rat)).